Reading from the N-terminus, the 324-residue chain is R2-like ligand binding oxidase (324 aa).

E79, E112, and H115 together coordinate Mn(2+). Residues 82–173 (VTEDIQPFMK…VNQVRASVTY (92 aa)) constitute a cross-link (3-(O4'-tyrosyl)-valine (Val-Tyr)). E112 contacts Fe cation. Residues E178, E213, and H216 each coordinate Fe cation. The disordered stretch occupies residues 304–324 (PEALEEKFGEEDAKAMSEAAG). A compositionally biased stretch (basic and acidic residues) spans 307–318 (LEEKFGEEDAKA).

This sequence belongs to the ribonucleoside diphosphate reductase small chain family. R2-like ligand binding oxidase subfamily. In terms of assembly, homodimer. The cofactor is Fe cation. Requires Mn(2+) as cofactor.

Its function is as follows. Probable oxidase. This chain is R2-like ligand binding oxidase, found in Rhodococcus jostii (strain RHA1).